A 169-amino-acid polypeptide reads, in one-letter code: Glycine-rich RNA-binding protein 8 (169 aa).

Residues 6 to 84 enclose the RRM domain; the sequence is YRCFVGGLAW…RVITVNEAQS (79 aa). Arg-47 is modified (ADP-ribosylarginine; by HopU1). The disordered stretch occupies residues 80–99; the sequence is NEAQSRGSGGGGGGRGGSGG. Residues 86-99 are compositionally biased toward gly residues; sequence GSGGGGGGRGGSGG. The segment at 86–168 is glycine-rich (GR) required for cell-to-cell movement; sequence GSGGGGGGRG…GGSYGGGGGG (83 aa). Positions 95-143 are nuclear targeting sequence (M9); the sequence is GGSGGGYRSGGGGGYSGGGGGGYSGGGGGGYERRSGGYGSGGGGGGRGY. Ser-103 is modified (phosphoserine). The disordered stretch occupies residues 130 to 169; sequence GGYGSGGGGGGRGYGGGGRREGGGYGGGDGGSYGGGGGGW.

The protein belongs to the GR-RBP family. In terms of assembly, interacts with TRN1. Binds to small phloem-mobile single-stranded RNAs (ss-sRNA, e.g. small interfering RNA (siRNA) and microRNA (miRNA)) in the phloeme exudate, including viral-derived sRNA (vsiRNA). In terms of processing, ADP-ribosylated by the Pseudomonas syringae type III effector HopU1. ADP-ribosylation reduces the ability of the protein to bind RNA. Ubiquitous.

Its subcellular location is the cytoplasm. The protein resides in the nucleus. It localises to the secreted. Functionally, plays a role in RNA transcription or processing during stress. Binds RNAs and DNAs sequence with a preference to single-stranded nucleic acids. Involved in mRNA alternative splicing of numerous targets by modulating splice site selection. Negatively regulates the circadian oscillations of its own transcript as well as RBG7 transcript. Forms an interlocked post-transcriptional negative feedback loop with the RBG7 autoregulatory circuit. Both proteins negatively autoregulate and reciprocally crossregulate by binding to their pre-mRNAs and promoting unproductive splicing coupled to degradation via the NMD pathway. Target of the Pseudomonas syringae type III effector HopU1. Mediates cell-to-cell trafficking of RNA interference (RNAi) signals (small RNAs (sRNA), e.g. small interfering RNA (siRNA) and microRNA (miRNA)) which regulate growth and development, as well as responses to environmental inputs, including pathogen attack; can compromise zucchini yellow mosaic virus (ZYMV) and tobacco rattle virus (TRV) infections at the early stage. The protein is Glycine-rich RNA-binding protein 8 of Arabidopsis thaliana (Mouse-ear cress).